Consider the following 1386-residue polypeptide: MLNSLQSGSRLRVDFSKIPQELDVPNLLQLQKSSYENFLMADSKSRENSGIEKVFRSVFPIHDPHNRISLEYAGSEIIKPKYTVRECMERGITYSVSLKMNIRLILWERDEKSGEKTGVKDVKEQSIYVRDIPYMTDRTSFIINGVERVVVNQLHRSPGVIFKEEEASTSSGTMIHTAQIIPDRGAWLYFEYDPKDILYVRINKRRKIPSTILFRALGYSKLDILKLFYPITKIIIKENKFFIEFRPEDFIGRVEFDVRDENGNLIVEAGKRLTKKKAQKLIEEGVKYIEFPLDVLMDRHLASPIIDQESGEVLYDTLTQLDEHKLKKILELGIDEFEIVNDIASGKDRAIINSFIADQESLKLLKQTEGIEDENDLAAIRIYKVMRPGEPVTKETAKAFIQQLFFDPERYDITRVGRMKMNHKLGLDVPEYVTVLTSEDIIKTVQYLIKVKNGQGHIDDRDHLGNRRIRAIGELLANELHSGLVKMQKAIRDKMSTISGSLDELMPHDLINSKMITNTILEFFATGQLSQFMDQTNPLSEITHKRRLSALGEGGLVKERAGFEVRDVHPTHYGRICPIETPEGQNIGLINTLSTYAKVNELGFIEAAYKVVKDGKITDEIVYLTAAQEEGKIIAPANTEIIDGNEIKGDYVEARKDGEIILVEKNKVELIDLTPRMVVGVAASLIPFLEHDDANRALMGSNMQRQAVPLLRTEAPIVGTGMEKVVARDAWESIRARRSGVVEKIDSENIYILGEDENGAYIDHYRLQKNLRTNQNTCFTQKPIVKKGQFVEAGQVITDGPNMDHAELALGKNMLVAFMPWNGYNFEDAIVVSERILRDDEFTSVHIYEKEIEARELKHGVEEITRDIPNVKEEEIEHLDESGIVKIGTYVKPGMILVGKVSPKGEVRPSPEERLLRAIFGEKAGHVVNKSLYCPQSMEGVVVDVKIFTKKGYDKDPRAIKAYEEEKERLSKEHHDKLLMIDREEMLKIISLLSKEPLEKDAKIKDKEFKAGEKISKEELSQINRFALNALVKSYAPEVQKKYNAIKTHFQNEKRKLTEEHEEKLAILEKEDILPSGVVKLVKVFIATKRKLKVGDKMAGRHGNKGIVSVIVPEIDMPYTKDGRIVDIVLNPLGVPSRMNIGQILEVHLGLIGKKLGEQIQEIFEAKRADFVKELRQKMIEIADVAKLMNAKETIEKMSDEELIEYARDWSKGVKFATPVFEGVTAEEFEKLYELAKMDLDGKTELYDGRTGEKFKERVTVGYMYMLKLHHLVDEKVHARSTGPYSLVTQQPVGGKALFGGQRFGEMEVWALEAHGAAHTLKEMLTIKSDDVEGRVAAYKAITKGEPIPQPGIPETLFVLTKELQSLGIDVEILDEVKDDEETGTN.

The protein belongs to the RNA polymerase beta chain family. In terms of assembly, the RNAP catalytic core consists of 2 alpha, 1 beta, 1 beta' and 1 omega subunit. When a sigma factor is associated with the core the holoenzyme is formed, which can initiate transcription.

It catalyses the reaction RNA(n) + a ribonucleoside 5'-triphosphate = RNA(n+1) + diphosphate. Functionally, DNA-dependent RNA polymerase catalyzes the transcription of DNA into RNA using the four ribonucleoside triphosphates as substrates. The sequence is that of DNA-directed RNA polymerase subunit beta from Nitratiruptor sp. (strain SB155-2).